A 558-amino-acid polypeptide reads, in one-letter code: Acid-sensing ion channel 4-B (558 aa).

Topologically, residues 1 to 71 are cytoplasmic; that stretch reads MPIEFVCKIK…TSERLGFRQT (71 aa). Residues 72 to 92 form a helical membrane-spanning segment; that stretch reads LWGLALLVSLGLFLYQATWSA. At 93–433 the chain is on the extracellular side; the sequence is ATYLERPHLA…ETIEQKKAYD (341 aa). 2 disulfide bridges follow: Cys120–Cys204 and Cys182–Cys189. Asn140, Asn183, Asn188, Asn210, and Asn245 each carry an N-linked (GlcNAc...) asparagine glycan. 5 cysteine pairs are disulfide-bonded: Cys298–Cys373, Cys317–Cys369, Cys321–Cys367, Cys330–Cys351, and Cys332–Cys344. A glycan (N-linked (GlcNAc...) asparagine) is linked at Asn374. The chain crosses the membrane as a helical span at residues 434–454; that stretch reads IAGLLGDIGGQMGLFIGASIL. Positions 450 to 452 match the GAS motif; ion selectivity filter motif; that stretch reads GAS. At 455–558 the chain is on the cytoplasmic side; sequence TILEILDYIY…QQAVQQDFAC (104 aa).

Belongs to the amiloride-sensitive sodium channel (TC 1.A.6) family. ASIC4 subfamily. As to quaternary structure, homotrimer. Heterotrimer; with other ASIC proteins producing functional channels. As to expression, expressed in central nervous system.

The protein resides in the cell membrane. It carries out the reaction Na(+)(in) = Na(+)(out). Functionally, does not exhibit measurable stand-alone pH-gated sodium channel activity but may form pH-gated heterotrimeric sodium channels. This Danio rerio (Zebrafish) protein is Acid-sensing ion channel 4-B.